The following is a 1321-amino-acid chain: Probable serine/threonine-protein kinase fnkE (1321 aa).

FNIP repeat units lie at residues 108 to 149, 150 to 191, 192 to 233, and 255 to 296; these read YNQL…NLSS, YNQP…DLSS, YNKL…DLSS, and YNKL…DISS. In terms of domain architecture, Protein kinase 1 spans 295 to 595; sequence SSYNQLLTPG…YNYVIKDSIM (301 aa). ATP-binding positions include 301–309 and K325; that span reads LTPGTLSNN. The active-site Proton acceptor is D465. FNIP repeat units lie at residues 654–696 and 741–783; these read FNHP…FNKF and FNQP…LGSN. The Protein kinase 2 domain occupies 860–1128; the sequence is WEIISTLGSG…EGDSVFEKYL (269 aa). ATP-binding positions include 866 to 874 and K895; that span reads LGSGNFGKV. The active-site Proton acceptor is the D990. FNIP repeat units lie at residues 1160–1202 and 1224–1268; these read YNQM…LGNE and FNFT…LGSN.

The protein belongs to the protein kinase superfamily. STE Ser/Thr protein kinase family. Requires Mg(2+) as cofactor.

It catalyses the reaction L-seryl-[protein] + ATP = O-phospho-L-seryl-[protein] + ADP + H(+). The enzyme catalyses L-threonyl-[protein] + ATP = O-phospho-L-threonyl-[protein] + ADP + H(+). This Dictyostelium discoideum (Social amoeba) protein is Probable serine/threonine-protein kinase fnkE.